The chain runs to 321 residues: Methionyl-tRNA formyltransferase (321 aa).

A (6S)-5,6,7,8-tetrahydrofolate-binding site is contributed by 111–114; that stretch reads GLLP.

The protein belongs to the Fmt family.

It catalyses the reaction L-methionyl-tRNA(fMet) + (6R)-10-formyltetrahydrofolate = N-formyl-L-methionyl-tRNA(fMet) + (6S)-5,6,7,8-tetrahydrofolate + H(+). In terms of biological role, attaches a formyl group to the free amino group of methionyl-tRNA(fMet). The formyl group appears to play a dual role in the initiator identity of N-formylmethionyl-tRNA by promoting its recognition by IF2 and preventing the misappropriation of this tRNA by the elongation apparatus. In Chlamydia abortus (strain DSM 27085 / S26/3) (Chlamydophila abortus), this protein is Methionyl-tRNA formyltransferase.